Here is a 148-residue protein sequence, read N- to C-terminus: NADPH-dependent 7-cyano-7-deazaguanine reductase (148 aa).

Cys50 functions as the Thioimide intermediate in the catalytic mechanism. Residue Asp57 is the Proton donor of the active site. Residues 72 to 74 and 91 to 92 each bind substrate; these read VES and HE.

The protein belongs to the GTP cyclohydrolase I family. QueF type 1 subfamily.

It is found in the cytoplasm. It carries out the reaction 7-aminomethyl-7-carbaguanine + 2 NADP(+) = 7-cyano-7-deazaguanine + 2 NADPH + 3 H(+). It participates in tRNA modification; tRNA-queuosine biosynthesis. In terms of biological role, catalyzes the NADPH-dependent reduction of 7-cyano-7-deazaguanine (preQ0) to 7-aminomethyl-7-deazaguanine (preQ1). This chain is NADPH-dependent 7-cyano-7-deazaguanine reductase, found in Helicobacter pylori (strain P12).